A 382-amino-acid chain; its full sequence is Carboxynorspermidine/carboxyspermidine decarboxylase (382 aa).

The residue at position 41 (Lys-41) is an N6-(pyridoxal phosphate)lysine. Glu-236 and Asp-272 together coordinate substrate.

This sequence belongs to the Orn/Lys/Arg decarboxylase class-II family. NspC subfamily. Homodimer. The cofactor is pyridoxal 5'-phosphate.

Its subcellular location is the cytoplasm. The enzyme catalyses carboxynorspermidine + H(+) = norspermidine + CO2. The catalysed reaction is carboxyspermidine + H(+) = spermidine + CO2. Functionally, catalyzes the decarboxylation of carboxynorspermidine and carboxyspermidine in vitro. In vivo, responsible for synthesizing spermidine, but not sym-norspermidine. This Campylobacter jejuni subsp. jejuni serotype O:6 (strain 81116 / NCTC 11828) protein is Carboxynorspermidine/carboxyspermidine decarboxylase.